The primary structure comprises 335 residues: Glucokinase (335 aa).

Position 11-16 (11-16 (ADIGGT)) interacts with ATP.

It belongs to the bacterial glucokinase family.

Its subcellular location is the cytoplasm. The catalysed reaction is D-glucose + ATP = D-glucose 6-phosphate + ADP + H(+). This chain is Glucokinase, found in Xanthomonas campestris pv. campestris (strain 8004).